The primary structure comprises 555 residues: CTP synthase (555 aa).

The amidoligase domain stretch occupies residues 1–277 (MPKEPETEYD…DQHVMERLNV (277 aa)). CTP is bound at residue serine 26. Position 26 (serine 26) interacts with UTP. 27-32 (GLGKGI) serves as a coordination point for ATP. Tyrosine 67 is a binding site for L-glutamine. An ATP-binding site is contributed by aspartate 84. Mg(2+)-binding residues include aspartate 84 and glutamate 152. Residues 159 to 161 (DIE), 198 to 203 (KTKPTQ), and lysine 234 contribute to the CTP site. Residues 198-203 (KTKPTQ) and lysine 234 contribute to the UTP site. The region spanning 307–542 (LVGKYDLEDA…LKSVDSTLDA (236 aa)) is the Glutamine amidotransferase type-1 domain. Residue glycine 364 coordinates L-glutamine. The Nucleophile; for glutamine hydrolysis role is filled by cysteine 391. Residues 392–395 (LGFQ), glutamate 415, and arginine 472 each bind L-glutamine. Catalysis depends on residues histidine 515 and glutamate 517.

This sequence belongs to the CTP synthase family. Homotetramer.

It catalyses the reaction UTP + L-glutamine + ATP + H2O = CTP + L-glutamate + ADP + phosphate + 2 H(+). The enzyme catalyses L-glutamine + H2O = L-glutamate + NH4(+). It carries out the reaction UTP + NH4(+) + ATP = CTP + ADP + phosphate + 2 H(+). The protein operates within pyrimidine metabolism; CTP biosynthesis via de novo pathway; CTP from UDP: step 2/2. Allosterically activated by GTP, when glutamine is the substrate; GTP has no effect on the reaction when ammonia is the substrate. The allosteric effector GTP functions by stabilizing the protein conformation that binds the tetrahedral intermediate(s) formed during glutamine hydrolysis. Inhibited by the product CTP, via allosteric rather than competitive inhibition. Catalyzes the ATP-dependent amination of UTP to CTP with either L-glutamine or ammonia as the source of nitrogen. Regulates intracellular CTP levels through interactions with the four ribonucleotide triphosphates. The protein is CTP synthase of Haloquadratum walsbyi (strain DSM 16790 / HBSQ001).